A 232-amino-acid polypeptide reads, in one-letter code: Large ribosomal subunit protein uL1 (232 aa).

It belongs to the universal ribosomal protein uL1 family. In terms of assembly, part of the 50S ribosomal subunit.

Binds directly to 23S rRNA. The L1 stalk is quite mobile in the ribosome, and is involved in E site tRNA release. Its function is as follows. Protein L1 is also a translational repressor protein, it controls the translation of the L11 operon by binding to its mRNA. The sequence is that of Large ribosomal subunit protein uL1 from Pelotomaculum thermopropionicum (strain DSM 13744 / JCM 10971 / SI).